Here is a 158-residue protein sequence, read N- to C-terminus: Transcription elongation factor GreA (158 aa).

A coiled-coil region spans residues 4-75; the sequence is QKQYPMTQEG…QRVENMLRNA (72 aa).

This sequence belongs to the GreA/GreB family.

In terms of biological role, necessary for efficient RNA polymerase transcription elongation past template-encoded arresting sites. The arresting sites in DNA have the property of trapping a certain fraction of elongating RNA polymerases that pass through, resulting in locked ternary complexes. Cleavage of the nascent transcript by cleavage factors such as GreA or GreB allows the resumption of elongation from the new 3'terminus. GreA releases sequences of 2 to 3 nucleotides. This Staphylococcus saprophyticus subsp. saprophyticus (strain ATCC 15305 / DSM 20229 / NCIMB 8711 / NCTC 7292 / S-41) protein is Transcription elongation factor GreA.